We begin with the raw amino-acid sequence, 280 residues long: Large ribosomal subunit protein uL2 (280 aa).

2 disordered regions span residues 32-54 and 221-280; these read SLLVPNKSTGGRNNNGRVTSRHM and RGMA…DSKK. Residues 37 to 49 show a composition bias toward polar residues; sequence NKSTGGRNNNGRV. Residues 232–242 show a composition bias toward gly residues; the sequence is MGGGEGKSKSG. The segment covering 257–280 has biased composition (basic residues); it reads KGLKTRKRKKASSKLIVRRRDSKK.

Belongs to the universal ribosomal protein uL2 family. Part of the 50S ribosomal subunit. Forms a bridge to the 30S subunit in the 70S ribosome.

Its function is as follows. One of the primary rRNA binding proteins. Required for association of the 30S and 50S subunits to form the 70S ribosome, for tRNA binding and peptide bond formation. It has been suggested to have peptidyltransferase activity; this is somewhat controversial. Makes several contacts with the 16S rRNA in the 70S ribosome. This Chloroherpeton thalassium (strain ATCC 35110 / GB-78) protein is Large ribosomal subunit protein uL2.